We begin with the raw amino-acid sequence, 158 residues long: Cyclic pyranopterin monophosphate synthase (158 aa).

Residues 75–77 and 113–114 contribute to the substrate site; these read LCH and ME. The active site involves Asp128.

Belongs to the MoaC family. In terms of assembly, homohexamer; trimer of dimers.

The catalysed reaction is (8S)-3',8-cyclo-7,8-dihydroguanosine 5'-triphosphate = cyclic pyranopterin phosphate + diphosphate. It participates in cofactor biosynthesis; molybdopterin biosynthesis. Functionally, catalyzes the conversion of (8S)-3',8-cyclo-7,8-dihydroguanosine 5'-triphosphate to cyclic pyranopterin monophosphate (cPMP). This Histophilus somni (strain 2336) (Haemophilus somnus) protein is Cyclic pyranopterin monophosphate synthase.